Consider the following 86-residue polypeptide: Putative membrane protein insertion efficiency factor (86 aa).

This sequence belongs to the UPF0161 family.

It localises to the cell inner membrane. Functionally, could be involved in insertion of integral membrane proteins into the membrane. In Pasteurella multocida (strain Pm70), this protein is Putative membrane protein insertion efficiency factor.